We begin with the raw amino-acid sequence, 278 residues long: Rhomboid protease GlpG (278 aa).

Helical transmembrane passes span 94-114 (AGPL…LMLI), 143-163 (AFLH…WYLG), 175-195 (LLVL…LFSG), 196-216 (ANFG…WLTG), 224-241 (ISLP…LIAG), and 245-267 (ILGL…LMAF). The Nucleophile role is filled by Ser202. The active site involves His255.

It belongs to the peptidase S54 family.

The protein resides in the cell inner membrane. It catalyses the reaction Cleaves type-1 transmembrane domains using a catalytic dyad composed of serine and histidine that are contributed by different transmembrane domains.. Functionally, rhomboid-type serine protease that catalyzes intramembrane proteolysis. The polypeptide is Rhomboid protease GlpG (Yersinia pestis bv. Antiqua (strain Antiqua)).